A 276-amino-acid polypeptide reads, in one-letter code: Myoblast determination protein 1 homolog 1 (276 aa).

The bHLH domain occupies Asp-84–Leu-135. The segment at Cys-228 to Gly-253 is disordered.

In terms of assembly, efficient DNA binding requires dimerization with another bHLH protein.

It localises to the nucleus. Functionally, may act as a transcriptional activator that promotes transcription of muscle-specific target genes and plays a role in muscle differentiation. In Oncorhynchus mykiss (Rainbow trout), this protein is Myoblast determination protein 1 homolog 1 (myod1).